Here is a 147-residue protein sequence, read N- to C-terminus: Cyanate hydratase (147 aa).

Catalysis depends on residues Arg88, Glu91, and Ser114.

Belongs to the cyanase family.

It carries out the reaction cyanate + hydrogencarbonate + 3 H(+) = NH4(+) + 2 CO2. Functionally, catalyzes the reaction of cyanate with bicarbonate to produce ammonia and carbon dioxide. The chain is Cyanate hydratase from Ralstonia pickettii (strain 12J).